The following is a 228-amino-acid chain: Protein GrpE (228 aa).

2 disordered regions span residues 1–31 (MADEKNKSQNPDLEQRDINNPRDREALNRAA) and 209–228 (GVSKGGPKATADNGASEGNG).

The protein belongs to the GrpE family. Homodimer.

It localises to the cytoplasm. In terms of biological role, participates actively in the response to hyperosmotic and heat shock by preventing the aggregation of stress-denatured proteins, in association with DnaK and GrpE. It is the nucleotide exchange factor for DnaK and may function as a thermosensor. Unfolded proteins bind initially to DnaJ; upon interaction with the DnaJ-bound protein, DnaK hydrolyzes its bound ATP, resulting in the formation of a stable complex. GrpE releases ADP from DnaK; ATP binding to DnaK triggers the release of the substrate protein, thus completing the reaction cycle. Several rounds of ATP-dependent interactions between DnaJ, DnaK and GrpE are required for fully efficient folding. This is Protein GrpE from Brucella anthropi (strain ATCC 49188 / DSM 6882 / CCUG 24695 / JCM 21032 / LMG 3331 / NBRC 15819 / NCTC 12168 / Alc 37) (Ochrobactrum anthropi).